The primary structure comprises 130 residues: Small ribosomal subunit protein uS8 (130 aa).

Belongs to the universal ribosomal protein uS8 family. As to quaternary structure, part of the 30S ribosomal subunit.

Functionally, one of the primary rRNA binding proteins, it binds directly to 16S rRNA central domain where it helps coordinate assembly of the platform of the 30S subunit. This chain is Small ribosomal subunit protein uS8, found in Pyrococcus abyssi (strain GE5 / Orsay).